Here is a 347-residue protein sequence, read N- to C-terminus: 4-hydroxy-2-oxovalerate aldolase 1 (347 aa).

Residues Ile13 to Ala265 form the Pyruvate carboxyltransferase domain. Residue Arg21 to Asp22 participates in substrate binding. Asp22 is a Mn(2+) binding site. His25 acts as the Proton acceptor in catalysis. Residues Ser175 and His204 each coordinate substrate. Positions 204 and 206 each coordinate Mn(2+). Tyr295 provides a ligand contact to substrate.

Belongs to the 4-hydroxy-2-oxovalerate aldolase family.

It catalyses the reaction (S)-4-hydroxy-2-oxopentanoate = acetaldehyde + pyruvate. In Rhodococcus erythropolis (strain PR4 / NBRC 100887), this protein is 4-hydroxy-2-oxovalerate aldolase 1.